The chain runs to 191 residues: Prostaglandin-H2 D-isomerase (191 aa).

The first 24 residues, 1 to 24 (MAALHTLWMGLVLLGVLGVLQTQA), serve as a signal peptide directing secretion. A Pyrrolidone carboxylic acid modification is found at Gln25. Asn51 carries N-linked (GlcNAc...) asparagine glycosylation. Cys65 functions as the Nucleophile in the catalytic mechanism. Asn78 carries N-linked (GlcNAc...) asparagine glycosylation. Cys89 and Cys186 are joined by a disulfide.

It belongs to the calycin superfamily. Lipocalin family. Monomer.

It localises to the rough endoplasmic reticulum. The protein resides in the nucleus membrane. It is found in the golgi apparatus. The protein localises to the cytoplasm. Its subcellular location is the perinuclear region. It localises to the secreted. It carries out the reaction prostaglandin H2 = prostaglandin D2. Its function is as follows. Catalyzes the conversion of PGH2 to PGD2, a prostaglandin involved in smooth muscle contraction/relaxation and a potent inhibitor of platelet aggregation. Involved in a variety of CNS functions, such as sedation, NREM sleep and PGE2-induced allodynia, and may have an anti-apoptotic role in oligodendrocytes. Binds small non-substrate lipophilic molecules, including biliverdin, bilirubin, retinal, retinoic acid and thyroid hormone, and may act as a scavenger for harmful hydrophobic molecules and as a secretory retinoid and thyroid hormone transporter. Possibly involved in development and maintenance of the blood-brain, blood-retina, blood-aqueous humor and blood-testis barrier. It is likely to play important roles in both maturation and maintenance of the central nervous system and male reproductive system. Involved in PLA2G3-dependent maturation of mast cells. PLA2G3 is secreted by immature mast cells and acts on nearby fibroblasts upstream to PTDGS to synthesize PGD2, which in turn promotes mast cell maturation and degranulation via PTGDR. This Ursus arctos (Brown bear) protein is Prostaglandin-H2 D-isomerase (PTGDS).